Here is a 243-residue protein sequence, read N- to C-terminus: MAAAANLEDVPSMDLMNELLRRMKCSSKPDKRLILVGPPGSGKGTQSPIIKDEYCLCHLATGDMLRAAVAAKTPLGVKAKEAMDKGELVSDDLVVGIIDEAMKKPSCQKGFILDGFPRTVVQAQKLDEMLEKKGTKVDKVLNFAIDDSILEERITGRWIHPSSGRSYHTKFAPPKVPGVDDVTGEPLIQRKDDTAEVLKSRLEAFHKQTEPVIDYYSKKALVANLHAEKPPKEVTAEVQKVLS.

Position 40-45 (G40–T45) interacts with ATP. Positions A60–V89 are NMP. AMP contacts are provided by residues T61, R66, E87–V89, G115–R118, and Q122. An LID region spans residues G156–D193. R157 is an ATP binding site. Positions 190 and 201 each coordinate AMP.

This sequence belongs to the adenylate kinase family.

The protein localises to the cytoplasm. It catalyses the reaction AMP + ATP = 2 ADP. Its function is as follows. Catalyzes the reversible transfer of the terminal phosphate group between ATP and AMP. Plays an important role in cellular energy homeostasis and in adenine nucleotide metabolism. The chain is Adenylate kinase 4 (ADK-B) from Oryza sativa subsp. japonica (Rice).